Reading from the N-terminus, the 355-residue chain is NAD-dependent protein deacylase sirtuin-6 (355 aa).

An N-acetylserine modification is found at Ser2. Ser10 is subject to Phosphoserine. One can recognise a Deacetylase sirtuin-type domain in the interval 27–272 (PEELERKVWE…TQLMKHLGLE (246 aa)). At Lys33 the chain carries N6-acetyllysine. NAD(+) is bound by residues Ala53, Thr57, Phe64, Arg65, Trp71, Gln113, and His133. The Proton acceptor role is filled by His133. Zn(2+) is bound by residues Cys141, Cys144, and Cys166. Lys170 participates in a covalent cross-link: Glycyl lysine isopeptide (Lys-Gly) (interchain with G-Cter in ubiquitin). Cys177 is a binding site for Zn(2+). Gly214, Ser216, Asn240, Gln242, and Val258 together coordinate NAD(+). A disordered region spans residues 284–355 (KALPPLPRPP…KRVKAEVTPS (72 aa)). Residues 287 to 296 (PPLPRPPTPK) show a composition bias toward pro residues. At Thr294 the chain carries Phosphothreonine. 2 positions are modified to phosphoserine: Ser303 and Ser330.

This sequence belongs to the sirtuin family. Class IV subfamily. In terms of assembly, homodimer; binds to nucleosomes and DNA ends as a homodimer. Interacts with RELA; interferes with RELA binding to target DNA. Interacts with SMARCA5; promoting recruitment of SMARCA5/SNF2H to double-strand breaks (DSBs) sites. Interacts with the mTORC2 complex; preventing the ability of SIRT6 to deacetylate FOXO1. Interacts with the CLOCK-BMAL1 complex; recruited by the CLOCK-BMAL1 complex to regulate expression of clock-controlled genes. Interacts with CSNK2A2; preventing CSNK2A2 localization to the nucleus. Post-translationally, acetylated at Lys-33. Deacetylation at Lys-33 by SIRT1 promotes homomultimerization and binding to double-strand breaks (DSBs) sites. Phosphorylation at Ser-10 by MAPK8/JNK1 in response to oxidative stress stimulates the mono-ADP-ribosyltransferase activity on PARP1, leading to PARP1 recruitment to double-strand breaks (DSBs). In terms of processing, monoubiquitinated at Lys-170 by STUB1/CHIP, preventing its degradation by the proteasome. Post-translationally, sumoylated, leading to specifically decrease ability to deacetylate histone H3 at 'Lys-56' (H3K56ac).

Its subcellular location is the nucleus. It is found in the chromosome. The protein resides in the telomere. The protein localises to the endoplasmic reticulum. It carries out the reaction N(6)-acetyl-L-lysyl-[protein] + NAD(+) + H2O = 2''-O-acetyl-ADP-D-ribose + nicotinamide + L-lysyl-[protein]. The catalysed reaction is N(6)-tetradecanoyl-L-lysyl-[protein] + NAD(+) + H2O = 2''-O-tetradecanoyl-ADP-D-ribose + nicotinamide + L-lysyl-[protein]. It catalyses the reaction N(6)-hexadecanoyl-L-lysyl-[protein] + NAD(+) + H2O = 2''-O-hexadecanoyl-ADP-D-ribose + nicotinamide + L-lysyl-[protein]. The enzyme catalyses L-lysyl-[protein] + NAD(+) = N(6)-(ADP-D-ribosyl)-L-lysyl-[protein] + nicotinamide + H(+). It carries out the reaction L-arginyl-[protein] + NAD(+) = N(omega)-(ADP-D-ribosyl)-L-arginyl-[protein] + nicotinamide + H(+). With respect to regulation, compared to the defatty-acylase activity, the protein deacetylase activity is weak in vitro, and requires activation. The histone deacetylase activity is strongly activated upon binding to nucleosomes and chromatin in vivo. Two molecules of SIRT6 associate with the acidic patch of one nucleosome, while the C-terminal disordered region of SIRT6 associates with nucleosomal DNA, leading to efficient histone deacetylation. The protein-lysine deacetylase activity is also activated by long-chain free fatty-acids. Functionally, NAD-dependent protein deacetylase, deacylase and mono-ADP-ribosyltransferase that plays an essential role in DNA damage repair, telomere maintenance, metabolic homeostasis, inflammation, tumorigenesis and aging. Displays protein-lysine deacetylase or defatty-acylase (demyristoylase and depalmitoylase) activity, depending on the context. Acts as a key histone deacetylase by catalyzing deacetylation of histone H3 at 'Lys-9', 'Lys-18' and 'Lys-56' (H3K9ac, H3K18ac and H3K56ac, respectively), suppressing target gene expression of several transcription factors, including NF-kappa-B. Acts as an inhibitor of transcription elongation by mediating deacetylation of H3K9ac and H3K56ac, preventing release of NELFE from chromatin and causing transcriptional pausing. Involved in DNA repair by promoting double-strand break (DSB) repair: acts as a DSB sensor by recognizing and binding DSB sites, leading to (1) recruitment of DNA repair proteins, such as SMARCA5/SNF2H, and (2) deacetylation of histone H3K9ac and H3K56ac. SIRT6 participation to DSB repair is probably involved in extension of life span. Also promotes DNA repair by deacetylating non-histone proteins, such as DDB2 and p53/TP53. Specifically deacetylates H3K18ac at pericentric heterochromatin, thereby maintaining pericentric heterochromatin silencing at centromeres and protecting against genomic instability and cellular senescence. Involved in telomere maintenance by catalyzing deacetylation of histone H3 in telomeric chromatin, regulating telomere position effect and telomere movement in response to DNA damage. Required for embryonic stem cell differentiation by mediating histone deacetylation of H3K9ac. Plays a major role in metabolism by regulating processes such as glycolysis, gluconeogenesis, insulin secretion and lipid metabolism. Inhibits glycolysis via histone deacetylase activity and by acting as a corepressor of the transcription factor HIF1A, thereby controlling the expression of multiple glycolytic genes. Has tumor suppressor activity by repressing glycolysis, thereby inhibiting the Warburg effect. Also regulates glycolysis and tumorigenesis by mediating deacetylation and nuclear export of non-histone proteins, such as isoform M2 of PKM (PKM2). Acts as a negative regulator of gluconeogenesis by mediating deacetylation of non-histone proteins, such as FOXO1 and KAT2A/GCN5. Promotes beta-oxidation of fatty acids during fasting by catalyzing deacetylation of NCOA2, inducing coactivation of PPARA. Acts as a regulator of lipid catabolism in brown adipocytes, both by catalyzing deacetylation of histones and non-histone proteins, such as FOXO1. Also acts as a regulator of circadian rhythms, both by regulating expression of clock-controlled genes involved in lipid and carbohydrate metabolism, and by catalyzing deacetylation of PER2. The defatty-acylase activity is specifically involved in regulation of protein secretion. Has high activity toward long-chain fatty acyl groups and mediates protein-lysine demyristoylation and depalmitoylation of target proteins, such as RRAS2 and TNF, thereby regulating their secretion. Also acts as a mono-ADP-ribosyltransferase by mediating mono-ADP-ribosylation of PARP1, TRIM28/KAP1 or SMARCC2/BAF170. Mono-ADP-ribosyltransferase activity is involved in DNA repair, cellular senescence, repression of LINE-1 retrotransposon elements and regulation of transcription. In Castor canadensis (American beaver), this protein is NAD-dependent protein deacylase sirtuin-6.